The sequence spans 710 residues: Nucleolin (710 aa).

The tract at residues 1-303 is disordered; the sequence is MVKLAKAGKN…KKQKVEGTEP (303 aa). N6-acetyllysine is present on residues Lys-9, Lys-15, and Lys-16. Residues 24–43 are compositionally biased toward acidic residues; that stretch reads VEEDSEDEEMSEDEEDDSSG. A phosphoserine mark is found at Ser-28, Ser-34, Ser-41, and Ser-42. Low complexity predominate over residues 56-107; it reads AAATSAKKVVVSPTKKVAVATPAKKAAVTPGKKAAATPAKKTVTPAKAVTTP. Repeat unit 1 spans residues 58–65; that stretch reads ATSAKKVV. Positions 58–135 are 8 X 8 AA tandem repeats of X-T-P-X-K-K-X-X; that stretch reads ATSAKKVVVS…GAAIPAKGAK (78 aa). Ser-67 carries the phosphoserine modification. A phosphothreonine mark is found at Thr-69, Thr-76, Thr-84, and Thr-92. Tandem repeats lie at residues 75–82, 83–90, and 91–98. Residue Lys-96 is modified to N6-acetyllysine. Thr-99 carries the post-translational modification Phosphothreonine. The 5; truncated repeat unit spans residues 99–104; that stretch reads TPAKAV. N6-acetyllysine is present on Lys-102. Repeat 6 spans residues 105–112; the sequence is TTPGKKGA. Thr-106 is subject to Phosphothreonine. Lys-109 bears the N6-acetyllysine mark. Thr-113 carries the post-translational modification Phosphothreonine. An N6-acetyllysine modification is found at Lys-116. A run of 2 repeats spans residues 120-127 and 128-135. A Phosphothreonine modification is found at Thr-121. Over residues 122-137 the composition is skewed to low complexity; it reads PGKKGAAIPAKGAKNG. Lys-124 carries the N6-acetyllysine modification. Ser-145 and Ser-153 each carry phosphoserine. Over residues 145–171 the composition is skewed to acidic residues; that stretch reads SDEEEDDDSEEDEEDDEDEDEDEDEIE. The span at 172–183 shows a compositional bias: low complexity; the sequence is PAAMKAAAAAPA. Phosphoserine occurs at positions 184 and 206. Acidic residues predominate over residues 184-211; it reads SEDEDDEDDEDDEDDDDDEEDDSEEEAM. Position 214 is a phosphothreonine (Thr-214). The segment covering 234 to 272 has biased composition (acidic residues); it reads EDEDEEEDDEDEDDDDDEDDEDDDDEDDEEEEEEEEEEP. Residues 273–300 are compositionally biased toward basic and acidic residues; the sequence is VKEAPGKRKKEMAKQKAAPEAKKQKVEG. A Glycyl lysine isopeptide (Lys-Gly) (interchain with G-Cter in SUMO1); alternate cross-link involves residue Lys-297. Lys-297 participates in a covalent cross-link: Glycyl lysine isopeptide (Lys-Gly) (interchain with G-Cter in SUMO2); alternate. Residue Thr-301 is modified to Phosphothreonine. 2 RRM domains span residues 307 to 383 and 393 to 466; these read FNLF…KPKG and RTLL…YTGE. Lys-318 carries the post-translational modification N6-acetyllysine. Lys-324 participates in a covalent cross-link: Glycyl lysine isopeptide (Lys-Gly) (interchain with G-Cter in SUMO1); alternate. A Glycyl lysine isopeptide (Lys-Gly) (interchain with G-Cter in SUMO2); alternate cross-link involves residue Lys-324. Lys-348 bears the N6-acetyllysine mark. Ser-356 bears the Phosphoserine mark. Thr-367 is subject to Phosphothreonine. Residue Lys-370 forms a Glycyl lysine isopeptide (Lys-Gly) (interchain with G-Cter in SUMO2) linkage. A Glycyl lysine isopeptide (Lys-Gly) (interchain with G-Cter in SUMO2); alternate cross-link involves residue Lys-377. Lys-377 is subject to N6-acetyllysine; alternate. 2 positions are modified to N6-acetyllysine: Lys-398 and Lys-403. Position 405 is a phosphothreonine (Thr-405). Residues Lys-427 and Lys-444 each carry the N6-acetyllysine modification. A phosphoserine mark is found at Ser-458 and Ser-460. An N6-acetyllysine mark is found at Lys-467 and Lys-477. The region spanning 486–560 is the RRM 3 domain; sequence KTLVLSNLSY…RAIRLELQGP (75 aa). Lys-513 is covalently cross-linked (Glycyl lysine isopeptide (Lys-Gly) (interchain with G-Cter in SUMO2); alternate). Lys-513 bears the N6-acetyllysine; alternate mark. The residue at position 521 (Lys-521) is an N6-acetyllysine. Residue Ser-563 is modified to Phosphoserine. Lys-572 carries the N6-acetyllysine modification. The region spanning 572-647 is the RRM 4 domain; that stretch reads KTLFVKGLSE…NKVTLDWAKP (76 aa). Residue Lys-577 forms a Glycyl lysine isopeptide (Lys-Gly) (interchain with G-Cter in SUMO2); alternate linkage. Lys-577 is modified (N6-acetyllysine; alternate). Ser-580 is subject to Phosphoserine. Residue Lys-589 forms a Glycyl lysine isopeptide (Lys-Gly) (interchain with G-Cter in SUMO1); alternate linkage. Lys-589 is covalently cross-linked (Glycyl lysine isopeptide (Lys-Gly) (interchain with G-Cter in SUMO2); alternate). A phosphoserine mark is found at Ser-591 and Ser-619. A Glycyl lysine isopeptide (Lys-Gly) (interchain with G-Cter in SUMO2) cross-link involves residue Lys-624. Positions 640–710 are disordered; sequence VTLDWAKPKG…KPQGKKTKFE (71 aa). Residue Lys-646 is modified to N6-acetyllysine. A compositionally biased stretch (gly residues) spans 650 to 696; the sequence is EGGFGGRGGGRGGFGGRGGGRGGRGGFGGRGRGGFGGRGGFRGGRGG. Residues Arg-656, Arg-660, Arg-666, Arg-670, Arg-673, Arg-679, Arg-681, Arg-687, and Arg-691 each carry the asymmetric dimethylarginine modification. Arg-694 bears the Asymmetric dimethylarginine; alternate mark. An Omega-N-methylarginine; alternate modification is found at Arg-694. A compositionally biased stretch (basic and acidic residues) spans 697–710; that stretch reads GGDHKPQGKKTKFE.

In terms of assembly, identified in a IGF2BP1-dependent mRNP granule complex containing untranslated mRNAs. Component of the SWAP complex that consists of NPM1, NCL/nucleolin, PARP1 and SWAP70. Component of a complex which is at least composed of HTATSF1/Tat-SF1, the P-TEFb complex components CDK9 and CCNT1, RNA polymerase II, SUPT5H, and NCL/nucleolin. Interacts with AICDA. Interacts with APTX. Interacts with C1QBP. Interacts with ERBB4. Interacts (via C-terminus) with FMR1 isoform 6 (via N-terminus). Interacts with GZF1; this interaction is important for nucleolar localization of GZF1. Interacts with NSUN2. Interacts with NVL. Interacts (via N-terminus domain) with SETX. Interacts (via RRM1 and C-terminal RRM4/Arg/Gly-rich domains) with TERT; the interaction is important for nucleolar localization of TERT. Interacts with WDR46. Interacts with ZFP36. Interacts with LRRC34. Interacts with RRP1B. Interacts with HNRNPU; this interaction occurs during mitosis. Interacts with RIOK1; RIOK1 recruits NCL to PRMT5 for symmetrically methylation. Interacts with ZBTB7B. Interacts with MDK; this interaction promotes NCL clustering and lateral movements of this complex into lipid rafts leading to MDK internalization. Interacts with HDGF (isoform 1). Interacts with ALKBH2. Interacts with IGFBP5; this interaction is necessary for IGFBP5 localization to the nucleus. Interacts with DDX24 (when ubiquitinated); this interaction may be important during ribosome biogenesis. Some glutamate residues are glycylated by TTLL8. This modification occurs exclusively on glutamate residues and results in a glycine chain on the gamma-carboxyl group. Post-translationally, symmetrically methylated by PRMT5.

Its subcellular location is the nucleus. The protein resides in the nucleolus. It is found in the cytoplasm. Its function is as follows. Nucleolin is the major nucleolar protein of growing eukaryotic cells. It is found associated with intranucleolar chromatin and pre-ribosomal particles. It induces chromatin decondensation by binding to histone H1. It is thought to play a role in pre-rRNA transcription and ribosome assembly. May play a role in the process of transcriptional elongation. Binds RNA oligonucleotides with 5'-UUAGGG-3' repeats more tightly than the telomeric single-stranded DNA 5'-TTAGGG-3' repeats. The protein is Nucleolin (NCL) of Homo sapiens (Human).